An 808-amino-acid chain; its full sequence is Piwi-like protein 1 (808 aa).

One can recognise a PAZ domain in the interval 214–333 (RINRVLNENN…IPGELCYLCG (120 aa)). Residues 300 to 322 (SMVRPKEKTENEPEGPTETDQSL) are disordered. A Piwi domain is found at 492–790 (HMALVFIPDD…LAELVGKIHR (299 aa)).

It belongs to the argonaute family. Piwi subfamily. Expressed in dividing adult somatic stem cells (neoblasts).

The polypeptide is Piwi-like protein 1 (wi-1) (Schmidtea mediterranea (Freshwater planarian flatworm)).